We begin with the raw amino-acid sequence, 351 residues long: GDSL esterase/lipase At4g26790 (351 aa).

An N-terminal signal peptide occupies residues 1–25 (MQRNRVLAFLLLAAQLLVKIPETCA). Residue S36 is the Nucleophile of the active site. An N-linked (GlcNAc...) asparagine glycan is attached at N118. Residues D326 and H329 contribute to the active site.

This sequence belongs to the 'GDSL' lipolytic enzyme family.

The protein resides in the secreted. The polypeptide is GDSL esterase/lipase At4g26790 (Arabidopsis thaliana (Mouse-ear cress)).